A 556-amino-acid polypeptide reads, in one-letter code: Dihydroxy-acid dehydratase (556 aa).

Position 78 (Asp-78) interacts with Mg(2+). Cys-119 serves as a coordination point for [2Fe-2S] cluster. Residues Asp-120 and Lys-121 each coordinate Mg(2+). An N6-carboxylysine modification is found at Lys-121. Residue Cys-195 coordinates [2Fe-2S] cluster. Glu-446 contacts Mg(2+). Ser-472 (proton acceptor) is an active-site residue.

It belongs to the IlvD/Edd family. As to quaternary structure, homodimer. The cofactor is [2Fe-2S] cluster. It depends on Mg(2+) as a cofactor.

It catalyses the reaction (2R)-2,3-dihydroxy-3-methylbutanoate = 3-methyl-2-oxobutanoate + H2O. It carries out the reaction (2R,3R)-2,3-dihydroxy-3-methylpentanoate = (S)-3-methyl-2-oxopentanoate + H2O. Its pathway is amino-acid biosynthesis; L-isoleucine biosynthesis; L-isoleucine from 2-oxobutanoate: step 3/4. The protein operates within amino-acid biosynthesis; L-valine biosynthesis; L-valine from pyruvate: step 3/4. Functions in the biosynthesis of branched-chain amino acids. Catalyzes the dehydration of (2R,3R)-2,3-dihydroxy-3-methylpentanoate (2,3-dihydroxy-3-methylvalerate) into 2-oxo-3-methylpentanoate (2-oxo-3-methylvalerate) and of (2R)-2,3-dihydroxy-3-methylbutanoate (2,3-dihydroxyisovalerate) into 2-oxo-3-methylbutanoate (2-oxoisovalerate), the penultimate precursor to L-isoleucine and L-valine, respectively. In Desulfatibacillum aliphaticivorans, this protein is Dihydroxy-acid dehydratase.